A 1785-amino-acid polypeptide reads, in one-letter code: Plexin-2 (1785 aa).

The first 17 residues, 1-17 (MLPESVFLLLISHFLRA), serve as a signal peptide directing secretion. In terms of domain architecture, Sema spans 18–444 (VTQPPFETEG…MPYGIILEEL (427 aa)). Residues 18 to 1139 (VTQPPFETEG…SDHALPSRLS (1122 aa)) are Extracellular-facing. A glycan (N-linked (GlcNAc...) asparagine) is linked at Asn-66. Intrachain disulfides connect Cys-84–Cys-91, Cys-118–Cys-126, Cys-247–Cys-349, Cys-263–Cys-300, Cys-318–Cys-336, Cys-447–Cys-464, Cys-453–Cys-487, Cys-456–Cys-473, and Cys-467–Cys-479. Residue Asn-249 is glycosylated (N-linked (GlcNAc...) asparagine). One can recognise a PSI 1 domain in the interval 446-488 (TCSHHSSCTECLVSVDPLCQWCHPTQSCTTSARCTSPVTSQCP). N-linked (GlcNAc...) asparagine glycosylation is found at Asn-502, Asn-536, and Asn-572. Cys-524 and Cys-544 form a disulfide bridge. The PSI 2 domain maps to 577-617 (DCSGYGTCSSCMSSEYNCAWCSGLHKCSNSCGALEKSKACV). Residues Asn-679 and Asn-702 are each glycosylated (N-linked (GlcNAc...) asparagine). The PSI 3 domain maps to 707 to 748 (SCTNLASDCSSCLALSPSLSCGWCNRQCSHECHESKATAVCD). IPT/TIG domains are found at residues 750–837 (PRID…LYSF), 840–924 (TSIF…PFEY), and 928–1040 (PSIS…LSPF). Residues Asn-864, Asn-886, Asn-984, and Asn-1016 are each glycosylated (N-linked (GlcNAc...) asparagine). The chain crosses the membrane as a helical span at residues 1140–1160 (LLILGLLLFIVVTLTVMCLVF). The stretch at 1159–1197 (VFKRRRQEREKEYRKIQLQMENLENNVRKECKQAFAELQ) forms a coiled coil. Topologically, residues 1161–1785 (KRRRQEREKE…HIYSTISDYE (625 aa)) are cytoplasmic.

Belongs to the plexin family. Interacts with mab-20. As to expression, expressed predominantly in the central nervous system from embryonic to adult stages. Expressed in early embryos in ventral neuroblasts. Expressed in neurons and in a subset of posterior lateral and ventral epidermal cells following epidermal enclosure. Present in neurons, muscles and weakly expressed in epidermal cells of the larval tail.

It localises to the cell membrane. Involved as a receptor for mab-20/sema-2a in the formation or stabilization of cell-cell contacts at several stages of epithelial morphogenesis. In early embryonic development, required for proper ventral closure of the epidermis. During male tail morphogenesis, involved in precursor cell sorting and in the formation of distinct sensory rays. Involved in axon guidance of SDQL neurons during neurogenesis. Probably in response to stimulation by mab-20, regulates fln-1-mediated remodeling of the actin cytoskeleton and thus axon guidance and/or fasciculation of DD/VD neurons. The protein is Plexin-2 of Caenorhabditis elegans.